The sequence spans 346 residues: Cell division protein FtsZ 2 (346 aa).

GTP-binding positions include 23-27, 110-112, glutamate 141, arginine 145, and aspartate 189; these read GGGGN and GTG. The tract at residues 320 to 346 is disordered; the sequence is SNRSAQPTAPEAMNGQTAAAVPSRTLQ.

This sequence belongs to the FtsZ family. As to quaternary structure, homodimer. Polymerizes to form a dynamic ring structure in a strictly GTP-dependent manner. Interacts directly with several other division proteins.

Its subcellular location is the cytoplasm. Essential cell division protein that forms a contractile ring structure (Z ring) at the future cell division site. The regulation of the ring assembly controls the timing and the location of cell division. One of the functions of the FtsZ ring is to recruit other cell division proteins to the septum to produce a new cell wall between the dividing cells. Binds GTP and shows GTPase activity. The polypeptide is Cell division protein FtsZ 2 (Rhizobium meliloti (strain 1021) (Ensifer meliloti)).